The primary structure comprises 338 residues: tRNA-specific 2-thiouridylase MnmA (338 aa).

Residues alanine 6–serine 13 and methionine 32 each bind ATP. Cysteine 92 acts as the Nucleophile in catalysis. A disulfide bridge links cysteine 92 with cysteine 186. Glycine 116 contributes to the ATP binding site. The interaction with tRNA stretch occupies residues lysine 134–glutamine 136. Residue cysteine 186 is the Cysteine persulfide intermediate of the active site. The segment at arginine 288–tyrosine 289 is interaction with tRNA.

The protein belongs to the MnmA/TRMU family.

It localises to the cytoplasm. The enzyme catalyses S-sulfanyl-L-cysteinyl-[protein] + uridine(34) in tRNA + AH2 + ATP = 2-thiouridine(34) in tRNA + L-cysteinyl-[protein] + A + AMP + diphosphate + H(+). Its function is as follows. Catalyzes the 2-thiolation of uridine at the wobble position (U34) of tRNA, leading to the formation of s(2)U34. This chain is tRNA-specific 2-thiouridylase MnmA, found in Campylobacter lari (strain RM2100 / D67 / ATCC BAA-1060).